The primary structure comprises 342 residues: Alternative oxidase, mitochondrial (342 aa).

The transit peptide at 1-20 (MIKTYQYRSILNSRNVGIRF) directs the protein to the mitochondrion. Residues 135 to 155 (LTRCIFLESVAGVPGMVAAFI) form a helical membrane-spanning segment. Positions 142, 181, and 184 each coordinate Fe cation. Residues 200–220 (FIIYMGQGVFANLFFLVYLIK) form a helical membrane-spanning segment. The Fe cation site is built by Glu-232, Glu-287, and His-290. Basic and acidic residues-rich tracts occupy residues 308–321 (PFALKVEDVPKEQQ) and 330–342 (PHPEGWNREQMRL). A disordered region spans residues 308–342 (PFALKVEDVPKEQQPDEYSLKTPHPEGWNREQMRL).

Belongs to the alternative oxidase family. Homodimer; disulfide-linked. Fe cation is required as a cofactor.

It is found in the mitochondrion inner membrane. In terms of biological role, catalyzes cyanide-resistant oxygen consumption. May increase respiration when the cytochrome respiratory pathway is restricted, or in response to low temperatures. The protein is Alternative oxidase, mitochondrial (AOX1) of Wickerhamomyces anomalus (Yeast).